A 159-amino-acid polypeptide reads, in one-letter code: Ribosomal RNA large subunit methyltransferase H (159 aa).

Residues leucine 76, glycine 108, and phenylalanine 127 to phenylalanine 132 contribute to the S-adenosyl-L-methionine site.

Belongs to the RNA methyltransferase RlmH family. Homodimer.

It localises to the cytoplasm. The enzyme catalyses pseudouridine(1915) in 23S rRNA + S-adenosyl-L-methionine = N(3)-methylpseudouridine(1915) in 23S rRNA + S-adenosyl-L-homocysteine + H(+). Specifically methylates the pseudouridine at position 1915 (m3Psi1915) in 23S rRNA. The sequence is that of Ribosomal RNA large subunit methyltransferase H from Halalkalibacterium halodurans (strain ATCC BAA-125 / DSM 18197 / FERM 7344 / JCM 9153 / C-125) (Bacillus halodurans).